The following is a 327-amino-acid chain: Biotin synthase (327 aa).

Residues 44 to 273 (FMGNKFDTCS…NAFLRFSGGR (230 aa)) enclose the Radical SAM core domain. Residues Cys62, Cys66, and Cys69 each contribute to the [4Fe-4S] cluster site. [2Fe-2S] cluster-binding residues include Cys138, Cys198, and Arg268.

This sequence belongs to the radical SAM superfamily. Biotin synthase family. Homodimer. It depends on [4Fe-4S] cluster as a cofactor. [2Fe-2S] cluster is required as a cofactor.

The enzyme catalyses (4R,5S)-dethiobiotin + (sulfur carrier)-SH + 2 reduced [2Fe-2S]-[ferredoxin] + 2 S-adenosyl-L-methionine = (sulfur carrier)-H + biotin + 2 5'-deoxyadenosine + 2 L-methionine + 2 oxidized [2Fe-2S]-[ferredoxin]. The protein operates within cofactor biosynthesis; biotin biosynthesis; biotin from 7,8-diaminononanoate: step 2/2. In terms of biological role, catalyzes the conversion of dethiobiotin (DTB) to biotin by the insertion of a sulfur atom into dethiobiotin via a radical-based mechanism. The chain is Biotin synthase from Parabacteroides distasonis (strain ATCC 8503 / DSM 20701 / CIP 104284 / JCM 5825 / NCTC 11152).